A 108-amino-acid polypeptide reads, in one-letter code: Transcription factor AmrZ (108 aa).

Functions both as a transcriptional activator and a repressor of multiple genes encoding virulence factors as well as genes involved in environmental adaptation. Represses genes involved in iron homeostasis. Modulates intracellular levels of c-di-GMP which in turn regulates swimming motility and biofilm formation. The protein is Transcription factor AmrZ of Pseudomonas ogarae (strain DSM 112162 / CECT 30235 / F113).